A 99-amino-acid polypeptide reads, in one-letter code: DNA-directed RNA polymerase subunit omega (99 aa).

This sequence belongs to the RNA polymerase subunit omega family. The RNAP catalytic core consists of 2 alpha, 1 beta, 1 beta' and 1 omega subunit. When a sigma factor is associated with the core the holoenzyme is formed, which can initiate transcription.

The catalysed reaction is RNA(n) + a ribonucleoside 5'-triphosphate = RNA(n+1) + diphosphate. Promotes RNA polymerase assembly. Latches the N- and C-terminal regions of the beta' subunit thereby facilitating its interaction with the beta and alpha subunits. This chain is DNA-directed RNA polymerase subunit omega, found in Xanthomonas oryzae pv. oryzae (strain MAFF 311018).